The primary structure comprises 301 residues: Thyrotroph embryonic factor (301 aa).

2 disordered regions span residues 1–70 (MSDA…ASTM) and 130–174 (ESAS…DPSC). Serine 30 is modified (phosphoserine). A compositionally biased stretch (basic and acidic residues) spans 39 to 59 (KLMENPPRETRLDKEKGKEKL). Residues 131 to 158 (SASSSTASPPSSSTAIFQPSETVSSTES) show a composition bias toward low complexity. The region spanning 231–294 (DEKYWTRRKK…GKCKTIVSKY (64 aa)) is the bZIP domain. The segment at 233–253 (KYWTRRKKNNVAAKRSRDARR) is basic motif. The leucine-zipper stretch occupies residues 254-261 (LKENQITI).

It belongs to the bZIP family. PAR subfamily. As to quaternary structure, binds DNA as a homodimer or a heterodimer. Can form a heterodimer with DBP. In terms of tissue distribution, isoform Alpha and isoform Beta are expressed at high levels in lung, bladder, kidney, gut and brain.

Its subcellular location is the nucleus. Its function is as follows. Transcription factor that binds to and transactivates the TSHB promoter. Binds to a minimal DNA-binding sequence 5'-[TC][AG][AG]TTA[TC][AG]-3'. Also activates the telokin promoter in smooth muscle-specific and calcium-dependent manner. This is Thyrotroph embryonic factor (Tef) from Mus musculus (Mouse).